A 318-amino-acid polypeptide reads, in one-letter code: Glutathione synthetase (318 aa).

An ATP-grasp domain is found at 133-317 (KMYALQFTSV…LGQQVMAWLF (185 aa)). 159–215 (VQQQGMAVLKPLGGKGGEGILFLQAGDRNLNSMIEISTQRGQLPVMLQEYLPAAKEG) serves as a coordination point for ATP. Mg(2+) is bound by residues Glu-288 and Asn-290.

It belongs to the prokaryotic GSH synthase family. It depends on Mg(2+) as a cofactor. Mn(2+) is required as a cofactor.

The enzyme catalyses gamma-L-glutamyl-L-cysteine + glycine + ATP = glutathione + ADP + phosphate + H(+). The protein operates within sulfur metabolism; glutathione biosynthesis; glutathione from L-cysteine and L-glutamate: step 2/2. The chain is Glutathione synthetase from Thermosynechococcus vestitus (strain NIES-2133 / IAM M-273 / BP-1).